Consider the following 413-residue polypeptide: Extracellular sucrase (413 aa).

Asp-44 functions as the Nucleophile in the catalytic mechanism. Glu-276 serves as the catalytic Proton donor/acceptor.

This sequence belongs to the glycosyl hydrolase 68 family.

The protein localises to the secreted. The enzyme catalyses Hydrolysis of terminal non-reducing beta-D-fructofuranoside residues in beta-D-fructofuranosides.. The polypeptide is Extracellular sucrase (sacC) (Zymomonas mobilis subsp. mobilis (strain ATCC 10988 / DSM 424 / LMG 404 / NCIMB 8938 / NRRL B-806 / ZM1)).